A 480-amino-acid chain; its full sequence is Cysteine--tRNA ligase (480 aa).

C29 serves as a coordination point for Zn(2+). The 'HIGH' region signature appears at 31 to 41 (PTVYGHAHLGH). Positions 221, 246, and 250 each coordinate Zn(2+). The short motif at 278–282 (KMGKS) is the 'KMSKS' region element. K281 serves as a coordination point for ATP.

Belongs to the class-I aminoacyl-tRNA synthetase family. Monomer. Zn(2+) is required as a cofactor.

The protein resides in the cytoplasm. The enzyme catalyses tRNA(Cys) + L-cysteine + ATP = L-cysteinyl-tRNA(Cys) + AMP + diphosphate. In Chlorobium chlorochromatii (strain CaD3), this protein is Cysteine--tRNA ligase.